Reading from the N-terminus, the 427-residue chain is DEAD-box ATP-dependent RNA helicase 56 (427 aa).

Positions 1 to 30 are disordered; it reads MGDARDNEAYEEELLDYEEEDEKVPDSGNK. The segment covering 9-23 has biased composition (acidic residues); it reads AYEEELLDYEEEDEK. The short motif at 46–74 is the Q motif element; the sequence is SGFRDFLLKPELLRAIVDSGFEHPSEVQH. The region spanning 77 to 250 is the Helicase ATP-binding domain; it reads IPQAILGMDV…KKFMQDPMEI (174 aa). Residue 90 to 97 coordinates ATP; that stretch reads AKSGMGKT. Residues 197–200 carry the DECD box motif; that stretch reads DECD. The Helicase C-terminal domain maps to 278 to 423; it reads KLNDLLDALD…ELPEQIDTST (146 aa).

This sequence belongs to the DEAD box helicase family. DECD subfamily. As to quaternary structure, interacts with ALY2 and MOS11.

The protein resides in the nucleus. It catalyses the reaction ATP + H2O = ADP + phosphate + H(+). Its function is as follows. ATP-dependent RNA helicase involved in pre-mRNA splicing. Required for the export of mRNA out of the nucleus. In addition to ssRNA and dsRNA, binds dsDNA, but not ssDNA. This Arabidopsis thaliana (Mouse-ear cress) protein is DEAD-box ATP-dependent RNA helicase 56 (RH56).